Here is a 389-residue protein sequence, read N- to C-terminus: 3-ketoacyl-CoA thiolase (389 aa).

Cysteine 91 (acyl-thioester intermediate) is an active-site residue. Catalysis depends on proton acceptor residues histidine 343 and cysteine 373.

Belongs to the thiolase-like superfamily. Thiolase family. In terms of assembly, heterotetramer of two alpha chains (FadB) and two beta chains (FadA).

The protein localises to the cytoplasm. It catalyses the reaction an acyl-CoA + acetyl-CoA = a 3-oxoacyl-CoA + CoA. It functions in the pathway lipid metabolism; fatty acid beta-oxidation. Catalyzes the final step of fatty acid oxidation in which acetyl-CoA is released and the CoA ester of a fatty acid two carbons shorter is formed. This Pseudoalteromonas translucida (strain TAC 125) protein is 3-ketoacyl-CoA thiolase.